We begin with the raw amino-acid sequence, 447 residues long: N-succinylarginine dihydrolase (447 aa).

Residues Ala-19–Ser-28, Asn-110, and His-137–Arg-138 contribute to the substrate site. The active site involves Glu-174. Residue Arg-212 coordinates substrate. His-248 is a catalytic residue. The substrate site is built by Asp-250 and Asn-359. The Nucleophile role is filled by Cys-365.

The protein belongs to the succinylarginine dihydrolase family. As to quaternary structure, homodimer.

The enzyme catalyses N(2)-succinyl-L-arginine + 2 H2O + 2 H(+) = N(2)-succinyl-L-ornithine + 2 NH4(+) + CO2. It functions in the pathway amino-acid degradation; L-arginine degradation via AST pathway; L-glutamate and succinate from L-arginine: step 2/5. In terms of biological role, catalyzes the hydrolysis of N(2)-succinylarginine into N(2)-succinylornithine, ammonia and CO(2). The polypeptide is N-succinylarginine dihydrolase (Escherichia fergusonii (strain ATCC 35469 / DSM 13698 / CCUG 18766 / IAM 14443 / JCM 21226 / LMG 7866 / NBRC 102419 / NCTC 12128 / CDC 0568-73)).